Here is a 207-residue protein sequence, read N- to C-terminus: Protein lin-7 homolog B (207 aa).

The short motif at 1-13 (MAALVEPLGLERD) is the Kinase interacting site element. Residues 10–65 (LERDVSRAVELLERLQRSGELPPQKLQALQRVLQSRFCSAIREVYEQLYDTLDITG) form the L27 domain. The PDZ domain maps to 93–175 (VVELPKTDEG…SVKLVVRYTP (83 aa)). The interval 187–207 (KMRSARRRQQHHSYTSLESRG) is disordered. A compositionally biased stretch (polar residues) spans 198-207 (HSYTSLESRG).

This sequence belongs to the lin-7 family. Forms a complex with CASK and CASKIN1. Component of the brain-specific heterotrimeric complex (LIN-10-LIN-2-LIN-7 complex) composed of at least APBA1, CASK, and LIN7, which associates with the motor protein KIF17 to transport vesicles along microtubules. Forms a heterotrimeric complex composed of MMP5, LIN7B and PATJ; the N-terminal L27 domain of PALS1 interacts with the L27 domain of PATJ and the C-terminal L27 domain of PALS1 interacts with the L27 domain of LIN7B. Forms a heterotrimeric complex with DLG1 and CASK via their L27 domains. Interacts with DLG4 and GRIN2B as well as CDH1 and CTNNB1, the channels KCNJ12/Kir2.2, KCNJ4/Kir2.3 and probably KCNJ2/Kir2.1 and SLC6A12/BGT-1 via its PDZ domain. The association of LIN7A with cadherin and beta-catenin is calcium-dependent, occurs at synaptic junctions and requires the actin cytoskeleton. Interacts with EGFR, ERBB2, ERBB3 and ERBB4 with both PDZ and KID domains. Associates with KIF17 via APBA1. Interacts with ASIC3. Interacts with TOPK. Interacts with RTKN. Interacts with APBA1. Interacts with MPP7. Interacts with DLG2. Interacts with DLG3. In terms of tissue distribution, expressed in the kidney; predominantly in the vasa recta.

It is found in the cell membrane. The protein resides in the basolateral cell membrane. The protein localises to the cell junction. It localises to the postsynaptic density membrane. Its subcellular location is the tight junction. Plays a role in establishing and maintaining the asymmetric distribution of channels and receptors at the plasma membrane of polarized cells. Forms membrane-associated multiprotein complexes that may regulate delivery and recycling of proteins to the correct membrane domains. The tripartite complex composed of LIN7 (LIN7A, LIN7B or LIN7C), CASK and APBA1 associates with the motor protein KIF17 to transport vesicles containing N-methyl-D-aspartate (NMDA) receptor subunit NR2B along microtubules. This complex may have the potential to couple synaptic vesicle exocytosis to cell adhesion in brain. Ensures the proper localization of GRIN2B (subunit 2B of the NMDA receptor) to neuronal postsynaptic density and may function in localizing synaptic vesicles at synapses where it is recruited by beta-catenin and cadherin. Required to localize Kir2 channels, GABA transporter (SLC6A12) and EGFR/ERBB1, ERBB2, ERBB3 and ERBB4 to the basolateral membrane of epithelial cells. May increase the amplitude of ASIC3 acid-evoked currents by stabilizing the channel at the cell surface. This chain is Protein lin-7 homolog B (Lin7b), found in Mus musculus (Mouse).